Here is a 190-residue protein sequence, read N- to C-terminus: GTP cyclohydrolase 1 (190 aa).

Cys-80, His-83, and Cys-151 together coordinate Zn(2+).

It belongs to the GTP cyclohydrolase I family. Toroid-shaped homodecamer, composed of two pentamers of five dimers.

It carries out the reaction GTP + H2O = 7,8-dihydroneopterin 3'-triphosphate + formate + H(+). It functions in the pathway cofactor biosynthesis; 7,8-dihydroneopterin triphosphate biosynthesis; 7,8-dihydroneopterin triphosphate from GTP: step 1/1. The polypeptide is GTP cyclohydrolase 1 (folE) (Rickettsia prowazekii (strain Madrid E)).